A 304-amino-acid polypeptide reads, in one-letter code: Large ribosomal subunit protein uL2m (304 aa).

The transit peptide at 1-60 (MALCALASALRSLSLASPAITARVPTLLPVGQSNVLLQLPSALALPAHRPVHMSADRSAK) directs the protein to the mitochondrion.

This sequence belongs to the universal ribosomal protein uL2 family. In terms of assembly, component of the mitochondrial ribosome large subunit (39S) which comprises a 16S rRNA and about 50 distinct proteins.

The protein resides in the mitochondrion. This chain is Large ribosomal subunit protein uL2m (Mrpl2), found in Rattus norvegicus (Rat).